Here is a 115-residue protein sequence, read N- to C-terminus: Large ribosomal subunit protein P2 (115 aa).

Met1 is modified (N-acetylmethionine). 2 positions are modified to phosphoserine: Ser17 and Ser19. Lys21 is modified (N6-acetyllysine; alternate). Lys21 carries the N6-succinyllysine; alternate modification. Over residues 76 to 90 (APGSAAPAAGSAPAA) the composition is skewed to low complexity. The segment at 76–115 (APGSAAPAAGSAPAAAEEKKEEKKEESEESDDDMGFGLFD) is disordered. Phosphoserine occurs at positions 79 and 86. Positions 91–101 (AEEKKEEKKEE) are enriched in basic and acidic residues. Ser102 and Ser105 each carry phosphoserine.

It belongs to the eukaryotic ribosomal protein P1/P2 family. As to quaternary structure, heterodimer with RPLP1 at the lateral ribosomal stalk of the large ribosomal subunit.

Functionally, plays an important role in the elongation step of protein synthesis. The polypeptide is Large ribosomal subunit protein P2 (RPLP2) (Bos taurus (Bovine)).